The sequence spans 441 residues: Probable D-serine dehydratase (441 aa).

An N6-(pyridoxal phosphate)lysine modification is found at Lys115.

The protein belongs to the serine/threonine dehydratase family. DsdA subfamily. Requires pyridoxal 5'-phosphate as cofactor.

The enzyme catalyses D-serine = pyruvate + NH4(+). The protein is Probable D-serine dehydratase of Fusobacterium nucleatum subsp. nucleatum (strain ATCC 25586 / DSM 15643 / BCRC 10681 / CIP 101130 / JCM 8532 / KCTC 2640 / LMG 13131 / VPI 4355).